We begin with the raw amino-acid sequence, 270 residues long: Putative methylsterol monooxygenase DDB_G0269788 (270 aa).

The next 3 membrane-spanning stretches (helical) occupy residues 31–51, 82–102, and 110–130; these read FIAHEVFYFGSFIPFFLCDFM, IFVQLPMMYIFDPAIKAIGLS, and IPYLIFTIACCFLIEDFYFYW. Residues 118–249 form the Fatty acid hydroxylase domain; that stretch reads ACCFLIEDFY…FTYLDKIFGT (132 aa). Residues 132–136 carry the Histidine box-1 motif; sequence HRALH. The Histidine box-2 motif lies at 145-149; that stretch reads HKVHH. The short motif at 224–230 is the Histidine box-3 element; sequence FHDFHHE.

The protein belongs to the sterol desaturase family. Fe cation is required as a cofactor.

Its subcellular location is the endoplasmic reticulum membrane. The enzyme catalyses 4,4-dimethyl-5alpha-cholest-7-en-3beta-ol + 6 Fe(II)-[cytochrome b5] + 3 O2 + 5 H(+) = 4alpha-carboxy-4beta-methyl-5alpha-cholest-7-ene-3beta-ol + 6 Fe(III)-[cytochrome b5] + 4 H2O. It functions in the pathway steroid biosynthesis; zymosterol biosynthesis; zymosterol from lanosterol: step 3/6. The sequence is that of Putative methylsterol monooxygenase DDB_G0269788 from Dictyostelium discoideum (Social amoeba).